We begin with the raw amino-acid sequence, 1444 residues long: DNA polymerase III PolC-type (1444 aa).

An Exonuclease domain is found at 421–577 (YVVFDVETTG…ADAEATGYLL (157 aa)).

The protein belongs to the DNA polymerase type-C family. PolC subfamily.

Its subcellular location is the cytoplasm. It carries out the reaction DNA(n) + a 2'-deoxyribonucleoside 5'-triphosphate = DNA(n+1) + diphosphate. Its function is as follows. Required for replicative DNA synthesis. This DNA polymerase also exhibits 3' to 5' exonuclease activity. This is DNA polymerase III PolC-type from Lacticaseibacillus paracasei (strain ATCC 334 / BCRC 17002 / CCUG 31169 / CIP 107868 / KCTC 3260 / NRRL B-441) (Lactobacillus paracasei).